An 89-amino-acid polypeptide reads, in one-letter code: Large ribosomal subunit protein bL27 (89 aa).

The interval 1 to 24 is disordered; it reads MAHKKAGGSSRNGRDSAGRRLGVK.

Belongs to the bacterial ribosomal protein bL27 family.

This chain is Large ribosomal subunit protein bL27, found in Maricaulis maris (strain MCS10) (Caulobacter maris).